A 444-amino-acid polypeptide reads, in one-letter code: Exodeoxyribonuclease 7 large subunit (444 aa).

This sequence belongs to the XseA family. As to quaternary structure, heterooligomer composed of large and small subunits.

Its subcellular location is the cytoplasm. It carries out the reaction Exonucleolytic cleavage in either 5'- to 3'- or 3'- to 5'-direction to yield nucleoside 5'-phosphates.. In terms of biological role, bidirectionally degrades single-stranded DNA into large acid-insoluble oligonucleotides, which are then degraded further into small acid-soluble oligonucleotides. This is Exodeoxyribonuclease 7 large subunit from Xylella fastidiosa (strain 9a5c).